Here is a 224-residue protein sequence, read N- to C-terminus: Large ribosomal subunit protein bL25 (224 aa).

Positions 190-224 (EPAPAAEGAAPAEGAAAAAAGGKPAAKTAKPAAKK) are disordered.

Belongs to the bacterial ribosomal protein bL25 family. CTC subfamily. Part of the 50S ribosomal subunit; part of the 5S rRNA/L5/L18/L25 subcomplex. Contacts the 5S rRNA. Binds to the 5S rRNA independently of L5 and L18.

This is one of the proteins that binds to the 5S RNA in the ribosome where it forms part of the central protuberance. This chain is Large ribosomal subunit protein bL25, found in Variovorax paradoxus (strain S110).